We begin with the raw amino-acid sequence, 102 residues long: MAPIPFEHALVLASVLFVLGLVALLIRRNLIVMLMSVEIMLNAAGLAFIAAGSRWGQPDGQVMFLLILTLAAAEVGVGLGLGLQVYRRHKTLDVDRLSEMQG.

3 helical membrane passes run 6-26 (FEHA…ALLI), 30-50 (LIVM…AFIA), and 62-82 (VMFL…LGLG).

Belongs to the complex I subunit 4L family. NDH-1 is composed of 14 different subunits. Subunits NuoA, H, J, K, L, M, N constitute the membrane sector of the complex.

The protein resides in the cell inner membrane. The enzyme catalyses a quinone + NADH + 5 H(+)(in) = a quinol + NAD(+) + 4 H(+)(out). Functionally, NDH-1 shuttles electrons from NADH, via FMN and iron-sulfur (Fe-S) centers, to quinones in the respiratory chain. The immediate electron acceptor for the enzyme in this species is believed to be ubiquinone. Couples the redox reaction to proton translocation (for every two electrons transferred, four hydrogen ions are translocated across the cytoplasmic membrane), and thus conserves the redox energy in a proton gradient. The protein is NADH-quinone oxidoreductase subunit K of Methylococcus capsulatus (strain ATCC 33009 / NCIMB 11132 / Bath).